Here is a 562-residue protein sequence, read N- to C-terminus: Dihydroxy-acid dehydratase (562 aa).

Asp80 contacts Mg(2+). Cys121 serves as a coordination point for [2Fe-2S] cluster. Mg(2+) contacts are provided by Asp122 and Lys123. Lys123 is modified (N6-carboxylysine). Residue Cys194 participates in [2Fe-2S] cluster binding. Glu446 contributes to the Mg(2+) binding site. Residue Ser472 is the Proton acceptor of the active site.

It belongs to the IlvD/Edd family. As to quaternary structure, homodimer. It depends on [2Fe-2S] cluster as a cofactor. Mg(2+) serves as cofactor.

The enzyme catalyses (2R)-2,3-dihydroxy-3-methylbutanoate = 3-methyl-2-oxobutanoate + H2O. It catalyses the reaction (2R,3R)-2,3-dihydroxy-3-methylpentanoate = (S)-3-methyl-2-oxopentanoate + H2O. The protein operates within amino-acid biosynthesis; L-isoleucine biosynthesis; L-isoleucine from 2-oxobutanoate: step 3/4. It participates in amino-acid biosynthesis; L-valine biosynthesis; L-valine from pyruvate: step 3/4. Its function is as follows. Functions in the biosynthesis of branched-chain amino acids. Catalyzes the dehydration of (2R,3R)-2,3-dihydroxy-3-methylpentanoate (2,3-dihydroxy-3-methylvalerate) into 2-oxo-3-methylpentanoate (2-oxo-3-methylvalerate) and of (2R)-2,3-dihydroxy-3-methylbutanoate (2,3-dihydroxyisovalerate) into 2-oxo-3-methylbutanoate (2-oxoisovalerate), the penultimate precursor to L-isoleucine and L-valine, respectively. The sequence is that of Dihydroxy-acid dehydratase from Staphylococcus epidermidis (strain ATCC 35984 / DSM 28319 / BCRC 17069 / CCUG 31568 / BM 3577 / RP62A).